The sequence spans 92 residues: Small ribosomal subunit protein uS19c (92 aa).

Belongs to the universal ribosomal protein uS19 family.

It is found in the plastid. The protein resides in the chloroplast. In terms of biological role, protein S19 forms a complex with S13 that binds strongly to the 16S ribosomal RNA. The chain is Small ribosomal subunit protein uS19c from Daucus carota (Wild carrot).